Consider the following 127-residue polypeptide: uncharacterized protein (127 aa).

The chain crosses the membrane as a helical span at residues 85 to 107; that stretch reads VYLGKIGFVLLHVFYLSCIAYYD.

The protein resides in the mitochondrion membrane. This is an uncharacterized protein from Dictyostelium discoideum (Social amoeba).